The primary structure comprises 723 residues: Homeobox protein HAT3.1 (723 aa).

Over residues 1-10 (MYKAVSKRVT) the composition is skewed to basic residues. Disordered stretches follow at residues 1–94 (MYKA…GSHR) and 135–173 (KRAQRSKEDAGPSSVVANSTPVGRPKKKNKTMNKGQVRE). A compositionally biased stretch (polar residues) spans 11 to 23 (RSSGSGLKQTNVD). Basic and acidic residues predominate over residues 58–83 (LHHEIMDHGKGNEEQKPTPQTVKKDS). The segment at 265-322 (DIFCAKCGSKDLSVDNDIILCDGFCDRGFHQYCLEPPLRKEDIPPDDEGWLCPGCDCK) adopts a PHD-type zinc-finger fold. Disordered stretches follow at residues 357–628 (GGQN…KTQR) and 680–723 (VEKL…RRRK). The segment covering 365 to 407 (LPSDDSDDEEYDPDCLNDNENDEDGSDDNEESENEDGSSDETE) has biased composition (acidic residues). Over residues 417-427 (ESFKEGKDIMK) the composition is skewed to basic and acidic residues. The span at 435–453 (DDSEDDDYDPDAPTCDDDK) shows a compositional bias: acidic residues. Basic and acidic residues-rich tracts occupy residues 518-530 (RNVERLDYKKLYD) and 547-556 (DKTARMGKED). The span at 580 to 589 (KKLIRKSKRA) shows a compositional bias: basic residues. Residues 614–673 (SSSSACKQTDPKTQRLYISFQENQYPDKATKESLAKELQMTVKQVNNWFKHRRWSINSKP) constitute a DNA-binding region (homeobox). Residues 680–690 (VEKLKTGKEGE) show a composition bias toward basic and acidic residues. Polar residues predominate over residues 695–705 (VAGSSKQTMET).

Belongs to the PHD-associated homeobox family. Primarily detected in root tissue.

Its subcellular location is the nucleus. Binds only to large DNA fragments. Recognizes a DNA fragment carrying 8 copies of box7 motif of the light-induced cab-E promoter of Nicotiana plumbaginifolia. Also recognizes the box7m1 motif. The polypeptide is Homeobox protein HAT3.1 (HAT3.1) (Arabidopsis thaliana (Mouse-ear cress)).